The chain runs to 664 residues: DNA ligase (664 aa).

Residues 34 to 38, 83 to 84, and E114 each bind NAD(+); these read DAEYD and SL. K116 functions as the N6-AMP-lysine intermediate in the catalytic mechanism. Residues R137, E172, K288, and K312 each coordinate NAD(+). Residues C406, C409, C424, and C429 each coordinate Zn(2+). The 79-residue stretch at 586–664 folds into the BRCT domain; sequence VRDNRLEGLT…EEEFRQMVMS (79 aa).

Belongs to the NAD-dependent DNA ligase family. LigA subfamily. The cofactor is Mg(2+). Mn(2+) is required as a cofactor.

It carries out the reaction NAD(+) + (deoxyribonucleotide)n-3'-hydroxyl + 5'-phospho-(deoxyribonucleotide)m = (deoxyribonucleotide)n+m + AMP + beta-nicotinamide D-nucleotide.. In terms of biological role, DNA ligase that catalyzes the formation of phosphodiester linkages between 5'-phosphoryl and 3'-hydroxyl groups in double-stranded DNA using NAD as a coenzyme and as the energy source for the reaction. It is essential for DNA replication and repair of damaged DNA. The sequence is that of DNA ligase from Carboxydothermus hydrogenoformans (strain ATCC BAA-161 / DSM 6008 / Z-2901).